Reading from the N-terminus, the 209-residue chain is NAD(P)H-quinone oxidoreductase subunit K 2 (209 aa).

Residues C53, C54, C118, and C149 each coordinate [4Fe-4S] cluster.

This sequence belongs to the complex I 20 kDa subunit family. As to quaternary structure, NDH-1 can be composed of about 15 different subunits; different subcomplexes with different compositions have been identified which probably have different functions. [4Fe-4S] cluster is required as a cofactor.

Its subcellular location is the cellular thylakoid membrane. The enzyme catalyses a plastoquinone + NADH + (n+1) H(+)(in) = a plastoquinol + NAD(+) + n H(+)(out). It catalyses the reaction a plastoquinone + NADPH + (n+1) H(+)(in) = a plastoquinol + NADP(+) + n H(+)(out). Its function is as follows. NDH-1 shuttles electrons from an unknown electron donor, via FMN and iron-sulfur (Fe-S) centers, to quinones in the respiratory and/or the photosynthetic chain. The immediate electron acceptor for the enzyme in this species is believed to be plastoquinone. Couples the redox reaction to proton translocation, and thus conserves the redox energy in a proton gradient. Cyanobacterial NDH-1 also plays a role in inorganic carbon-concentration. The polypeptide is NAD(P)H-quinone oxidoreductase subunit K 2 (Acaryochloris marina (strain MBIC 11017)).